The chain runs to 291 residues: ATP synthase gamma chain (291 aa).

The protein belongs to the ATPase gamma chain family. As to quaternary structure, F-type ATPases have 2 components, CF(1) - the catalytic core - and CF(0) - the membrane proton channel. CF(1) has five subunits: alpha(3), beta(3), gamma(1), delta(1), epsilon(1). CF(0) has three main subunits: a, b and c.

It localises to the cell inner membrane. Functionally, produces ATP from ADP in the presence of a proton gradient across the membrane. The gamma chain is believed to be important in regulating ATPase activity and the flow of protons through the CF(0) complex. In Caulobacter vibrioides (strain NA1000 / CB15N) (Caulobacter crescentus), this protein is ATP synthase gamma chain.